The following is a 413-amino-acid chain: MAEHSFDVNEVIKDFPILDQKVNGKRLAYLDSTATSQTPMQVLNVLEDYYKRYNSNVHRGVHTLGSLATDGYENARETVRRFINAKYFEEIIFTRGTTASINLVAHSYGDANVEEGDEIVVTEMEHHANIVPWQQLAKRKNATLKFIPMTADGELNIEDIKQTINDKTKIVAIAHISNVLGTINDVKTIAEIAHQHGAIISVDGAQAAPHMKLDMQEMNADFYSFSGHKMLGPTGIGVLFGKRELLQKMEPIEFGGDMIDFVSKYDATWADLPTKFEAGTPLIAQAIGLAEAIRYLERIGFDAIHKYEQELTIYAYEQMSAIEGIEIYGPPKDRRAGVITFNLQDVHPHDVATAVDTEGVAVRAGHHCAQPLMKWLNVSSTARASFYIYNTKEDIDQLINALKQTKEFFSYEF.

Lys-229 carries the N6-(pyridoxal phosphate)lysine modification. The active-site Cysteine persulfide intermediate is the Cys-368.

It belongs to the class-V pyridoxal-phosphate-dependent aminotransferase family. Csd subfamily. The cofactor is pyridoxal 5'-phosphate.

It catalyses the reaction (sulfur carrier)-H + L-cysteine = (sulfur carrier)-SH + L-alanine. Catalyzes the removal of elemental sulfur and selenium atoms from L-cysteine, L-cystine, L-selenocysteine, and L-selenocystine to produce L-alanine. In Staphylococcus aureus (strain Mu50 / ATCC 700699), this protein is Probable cysteine desulfurase (csd).